The chain runs to 654 residues: Protein THALLO (654 aa).

The segment covering 1–16 (MGKKGGTLKRSSKSTK) has biased composition (basic residues). 3 disordered regions span residues 1–23 (MGKKGGTLKRSSKSTKTRKDIVE), 35–145 (KQRD…SDDE), and 164–212 (SITA…KDTH). The short motif at 2–9 (GKKGGTLK) is the Nuclear localization signal 1 element. Acidic residues-rich tracts occupy residues 44–56 (VNDDTDESDEDDV), 64–82 (GVDDESEEDEDTEDEEEAE), and 103–114 (GDDEMADDDKDK). Residues 140–160 (LSSDDEDIKAEEEEVIRLRAE) adopt a coiled-coil conformation. Over residues 171–181 (GLDDDSEEDSD) the composition is skewed to acidic residues. Residues 182–212 (RELTMEEISDKGKQATKSITDKKEKGDKDTH) are compositionally biased toward basic and acidic residues. Residues 243–263 (LSELNDAVEELESKINPVMNK) adopt a coiled-coil conformation. Disordered stretches follow at residues 362-397 (SDSVDRITQDTAKPMKIDNAREEKKKKGEKRKHQND), 470-492 (VSTKRKPKTISGDDDLPQRDDIG), and 509-654 (KSSE…SIRM). Residues 364–387 (SVDRITQDTAKPMKIDNAREEKKK) are compositionally biased toward basic and acidic residues. Residues 524–546 (SDDEDDNDGDNNDMVDNDGESED) show a composition bias toward acidic residues. A compositionally biased stretch (basic residues) spans 552–561 (VKQKQQAKRA). Polar residues predominate over residues 588–599 (SNQMVSNRGLTR). Residues 608–615 (PRKKYRKN) carry the Nuclear localization signal 2 motif. Residues 645–654 (NPNTSRSIRM) show a composition bias toward polar residues.

It belongs to the SAS10 family. In terms of assembly, interacts with NUCL1, NUCL2, JMJ14, NOF1 and MPP10 in the nucleus. As to expression, mainly present in tissues undergoing rapid cellular growth and differentiation. Mostly expressed in shoots and flowers, and, to a lower extent, in leaves, siliques, roots and seedlings.

Its subcellular location is the nucleus. The protein resides in the nucleolus. Essential protein during embryogenesis. Involved both in gene transcription regulation and in processing events critical for proper rRNA biogenesis and nucleolar organization during reproduction; contributes to pre-rRNA processing at the 5' external transcribed spacer. Binds RNA. The polypeptide is Protein THALLO (Arabidopsis thaliana (Mouse-ear cress)).